We begin with the raw amino-acid sequence, 321 residues long: Probable cell division protein WhiA (321 aa).

Positions 276–309 (NLKELGELLEPPVGKSGVNHRLRKLEKIAEQLHQ) form a DNA-binding region, H-T-H motif.

The protein belongs to the WhiA family.

Its function is as follows. Involved in cell division and chromosome segregation. The chain is Probable cell division protein WhiA from Natranaerobius thermophilus (strain ATCC BAA-1301 / DSM 18059 / JW/NM-WN-LF).